The following is a 173-amino-acid chain: Photosystem I assembly protein Ycf3 (173 aa).

3 TPR repeats span residues 35-68 (AFVYYRDGMSAQADGEYKEALDNYYEALKLEDDA), 72-105 (SYILYNIGIIHGSNGEHERALEYYHEAIELNPNL), and 120-153 (GERAKEEGREDESEALFDKAAEYWKQAIRLAPNN).

Belongs to the Ycf3 family.

Its subcellular location is the cellular thylakoid membrane. Functionally, essential for the assembly of the photosystem I (PSI) complex. May act as a chaperone-like factor to guide the assembly of the PSI subunits. The polypeptide is Photosystem I assembly protein Ycf3 (Gloeothece citriformis (strain PCC 7424) (Cyanothece sp. (strain PCC 7424))).